We begin with the raw amino-acid sequence, 95 residues long: MTKSELIERLASQQSHIPAKAVEDAVKEMLEHMASTLAQGERIEIRGFGSFSLHYRAPRTGRNPKTGDKVELEGKYVPHFKPGKELRDRANIYEE.

Belongs to the bacterial histone-like protein family. Heterodimer of an alpha and a beta chain.

This protein is one of the two subunits of integration host factor, a specific DNA-binding protein that functions in genetic recombination as well as in transcriptional and translational control. This chain is Integration host factor subunit beta, found in Klebsiella pneumoniae (strain 342).